Here is a 178-residue protein sequence, read N- to C-terminus: Large ribosomal subunit protein uL10 (178 aa).

It belongs to the universal ribosomal protein uL10 family. Part of the ribosomal stalk of the 50S ribosomal subunit. The N-terminus interacts with L11 and the large rRNA to form the base of the stalk. The C-terminus forms an elongated spine to which L12 dimers bind in a sequential fashion forming a multimeric L10(L12)X complex.

In terms of biological role, forms part of the ribosomal stalk, playing a central role in the interaction of the ribosome with GTP-bound translation factors. The chain is Large ribosomal subunit protein uL10 from Mycobacterium tuberculosis (strain ATCC 25177 / H37Ra).